The sequence spans 169 residues: Small ribosomal subunit protein bS16 (169 aa).

The tract at residues 114 to 169 is disordered; it reads AEGPTAEAITEKRRKAKEEAEAKAAAEAEAAEKAEAEAAEKAAAEAAEESEEASAE. Residues 129–156 show a composition bias toward basic and acidic residues; that stretch reads AKEEAEAKAAAEAEAAEKAEAEAAEKAA. Residues 159 to 169 show a composition bias toward acidic residues; sequence AAEESEEASAE.

This sequence belongs to the bacterial ribosomal protein bS16 family.

The sequence is that of Small ribosomal subunit protein bS16 from Corynebacterium urealyticum (strain ATCC 43042 / DSM 7109).